We begin with the raw amino-acid sequence, 666 residues long: DNA mismatch repair protein MutL (666 aa).

Belongs to the DNA mismatch repair MutL/HexB family.

This protein is involved in the repair of mismatches in DNA. It is required for dam-dependent methyl-directed DNA mismatch repair. May act as a 'molecular matchmaker', a protein that promotes the formation of a stable complex between two or more DNA-binding proteins in an ATP-dependent manner without itself being part of a final effector complex. The polypeptide is DNA mismatch repair protein MutL (Clostridium botulinum (strain Loch Maree / Type A3)).